The chain runs to 828 residues: Hapless 2 (828 aa).

The N-terminal stretch at 1–32 (MKNKLINLRSKHIYKLIIIIFFCIILKYYKWC) is a signal peptide. Topologically, residues 33-680 (DFKNKVFFIQ…INTVKTLIGK (648 aa)) are extracellular. Cysteines 53 and 62 form a disulfide. An N-linked (GlcNAc...) asparagine glycan is attached at asparagine 74. 4 disulfides stabilise this stretch: cysteine 142–cysteine 209, cysteine 170–cysteine 381, cysteine 172–cysteine 191, and cysteine 363–cysteine 388. The interval 174–191 (TYNYFKDDEFIKRAKLKC) is cd loop; involved in gamete fusion. N-linked (GlcNAc...) asparagine glycans are attached at residues asparagine 233, asparagine 250, asparagine 264, asparagine 293, and asparagine 333. N-linked (GlcNAc...) asparagine glycosylation is found at asparagine 479, asparagine 516, asparagine 531, and asparagine 539. A disulfide bridge connects residues cysteine 546 and cysteine 592. Residues 681 to 701 (FAIIAILIILAPALIPLLPFF) form a helical membrane-spanning segment. The Cytoplasmic portion of the chain corresponds to 702–828 (LNFFFLFIST…SGKSKIPPLR (127 aa)). Positions 773–828 (RKNKKKFNKNNISSNIKHKKGGKKVKQKEPNRNSNHTSHEYADTSPSGKSKIPPLR) are disordered. A compositionally biased stretch (basic residues) spans 788-798 (IKHKKGGKKVK). Positions 799–814 (QKEPNRNSNHTSHEYA) are enriched in basic and acidic residues.

It belongs to the HAP2/GCS1 family.

The protein resides in the cell membrane. During fertilization, required on male gametes for their fusion with female gametes, and for subsequent ookinete formation in the host. Thereby, required for mosquito-mediated transmission to other animals. Probably initiates the fusion of gamete cell membranes by inserting part of its extracellular domain into the cell membrane of a female gamete. This is Hapless 2 from Plasmodium berghei (strain Anka).